The primary structure comprises 1346 residues: DNA-directed RNA polymerase subunit beta (1346 aa).

Belongs to the RNA polymerase beta chain family. The RNAP catalytic core consists of 2 alpha, 1 beta, 1 beta' and 1 omega subunit. When a sigma factor is associated with the core the holoenzyme is formed, which can initiate transcription.

The catalysed reaction is RNA(n) + a ribonucleoside 5'-triphosphate = RNA(n+1) + diphosphate. Its function is as follows. DNA-dependent RNA polymerase catalyzes the transcription of DNA into RNA using the four ribonucleoside triphosphates as substrates. The sequence is that of DNA-directed RNA polymerase subunit beta from Psychromonas ingrahamii (strain DSM 17664 / CCUG 51855 / 37).